The primary structure comprises 355 residues: 3-dehydroquinate synthase (355 aa).

NAD(+) is bound by residues 67-72 (DGEIYK), 101-105 (GVIGD), 125-126 (TT), Lys138, Lys147, and 165-168 (FLNT). Zn(2+) contacts are provided by Glu180, His243, and His260.

This sequence belongs to the sugar phosphate cyclases superfamily. Dehydroquinate synthase family. It depends on NAD(+) as a cofactor. Co(2+) serves as cofactor. Requires Zn(2+) as cofactor.

It is found in the cytoplasm. It carries out the reaction 7-phospho-2-dehydro-3-deoxy-D-arabino-heptonate = 3-dehydroquinate + phosphate. The protein operates within metabolic intermediate biosynthesis; chorismate biosynthesis; chorismate from D-erythrose 4-phosphate and phosphoenolpyruvate: step 2/7. Functionally, catalyzes the conversion of 3-deoxy-D-arabino-heptulosonate 7-phosphate (DAHP) to dehydroquinate (DHQ). The chain is 3-dehydroquinate synthase from Buchnera aphidicola subsp. Baizongia pistaciae (strain Bp).